We begin with the raw amino-acid sequence, 427 residues long: Glutamate-1-semialdehyde 2,1-aminomutase (427 aa).

N6-(pyridoxal phosphate)lysine is present on K264.

This sequence belongs to the class-III pyridoxal-phosphate-dependent aminotransferase family. HemL subfamily. In terms of assembly, homodimer. Pyridoxal 5'-phosphate is required as a cofactor.

It is found in the cytoplasm. It catalyses the reaction (S)-4-amino-5-oxopentanoate = 5-aminolevulinate. Its pathway is porphyrin-containing compound metabolism; protoporphyrin-IX biosynthesis; 5-aminolevulinate from L-glutamyl-tRNA(Glu): step 2/2. This Campylobacter concisus (strain 13826) protein is Glutamate-1-semialdehyde 2,1-aminomutase.